Consider the following 146-residue polypeptide: Hemoglobin subunit beta (146 aa).

Valine 1 bears the N-acetylvaline mark. Positions 2–146 (HLTGEEKAAV…VANALAHKYH (145 aa)) constitute a Globin domain. The residue at position 12 (threonine 12) is a Phosphothreonine. The residue at position 44 (serine 44) is a Phosphoserine. The residue at position 59 (lysine 59) is an N6-acetyllysine. Heme b is bound at residue histidine 63. An N6-acetyllysine modification is found at lysine 82. Histidine 92 serves as a coordination point for heme b. Cysteine 93 bears the S-nitrosocysteine mark. Lysine 144 is modified (N6-acetyllysine).

This sequence belongs to the globin family. In terms of assembly, heterotetramer of two alpha chains and two beta chains. In terms of tissue distribution, red blood cells.

Its function is as follows. Involved in oxygen transport from the lung to the various peripheral tissues. The polypeptide is Hemoglobin subunit beta (HBB) (Aotus trivirgatus (Three-striped night monkey)).